A 412-amino-acid chain; its full sequence is Early growth response protein 2b (412 aa).

A disordered region spans residues 269-299 (YTPQNLPLRPILRPRKYPNRPSKTPVHERPY). 3 C2H2-type zinc fingers span residues 299–323 (YPCP…IRIH), 329–351 (FQCR…IRTH), and 357–379 (FACD…TKIH). The interval 371–412 (ERKRHTKIHLRQKERKSSSSSTGVSSSERGVATSICSSSSNQ) is disordered. The segment covering 374–384 (RHTKIHLRQKE) has biased composition (basic residues). The segment covering 388 to 401 (SSSSTGVSSSERGV) has biased composition (low complexity).

It belongs to the EGR C2H2-type zinc-finger protein family.

Its subcellular location is the nucleus. In terms of biological role, sequence-specific DNA-binding transcription factor. Binds to two specific DNA sites located in the promoter region of HOXA4. The chain is Early growth response protein 2b (egr2b) from Danio rerio (Zebrafish).